We begin with the raw amino-acid sequence, 499 residues long: Glucosylglycerol-phosphate synthase (499 aa).

Belongs to the glycosyltransferase 20 family. Interacts with GGP-P. Seems to be degraded, at least in vitro, by FtsH2. In an ftsH2 disruption strain inactive GGPS accumulates.

The protein localises to the cytoplasm. The catalysed reaction is ADP-alpha-D-glucose + sn-glycerol 3-phosphate = 2-O-(alpha-D-glucopyranosyl)-sn-glycerol 3-phosphate + ADP + H(+). It functions in the pathway glycan metabolism; glucosylglycerol biosynthesis. Involved in salt tolerance by producing GG-phosphate from ADP-glucose and glycerol-3-phosphate (G3P), an intermediate in the synthesis of the osmolyte glucosylglycerol (GG). The chain is Glucosylglycerol-phosphate synthase (ggpS) from Synechocystis sp. (strain ATCC 27184 / PCC 6803 / Kazusa).